The following is a 333-amino-acid chain: Fibronectin type III domain-containing protein 11 (333 aa).

Residues 212–310 (PVMFDRKESV…DSLTLHTRPG (99 aa)) form the Fibronectin type-III domain. Residues 307 to 333 (TRPGPPEGLAPSRLGKLGLSLTTPSER) are disordered.

The sequence is that of Fibronectin type III domain-containing protein 11 from Bos taurus (Bovine).